A 24-amino-acid chain; its full sequence is FWGALIKGAAKLIPSVVGLFKKKQ.

In terms of tissue distribution, expressed by the venom gland.

The protein resides in the secreted. The protein localises to the target cell membrane. Its function is as follows. Has a broad spectrum of activity against both Gram-positive and Gram-negative bacteria and S.cerevisiae. Has insecticidal and hemolytic activities. May act by disrupting the integrity of the bacterial cell membrane. In Neoponera goeldii (Ponerine ant), this protein is M-poneritoxin-Ng1e.